The following is a 130-amino-acid chain: Ribosome-binding factor A (130 aa).

This sequence belongs to the RbfA family. As to quaternary structure, monomer. Binds 30S ribosomal subunits, but not 50S ribosomal subunits or 70S ribosomes.

The protein resides in the cytoplasm. Its function is as follows. One of several proteins that assist in the late maturation steps of the functional core of the 30S ribosomal subunit. Associates with free 30S ribosomal subunits (but not with 30S subunits that are part of 70S ribosomes or polysomes). Required for efficient processing of 16S rRNA. May interact with the 5'-terminal helix region of 16S rRNA. The protein is Ribosome-binding factor A of Pseudomonas aeruginosa (strain LESB58).